Consider the following 124-residue polypeptide: MTSRGVHLLLRLLFLLAVFYSSDSSLMCYHCLLPSPNCSTVTNCTPNHDACLTAVSGPRVYRQCWRYEDCNFEFISNRLEENSLKYNCCRKDLCNGPEDDGTALTGRTVLLVAPLLAAARNLCL.

The N-terminal stretch at 1 to 24 (MTSRGVHLLLRLLFLLAVFYSSDS) is a signal peptide. The 77-residue stretch at 25–101 (SLMCYHCLLP…DLCNGPEDDG (77 aa)) folds into the UPAR/Ly6 domain. 5 cysteine pairs are disulfide-bonded: C28/C51, C31/C38, C44/C64, C70/C88, and C89/C94. N37 carries an N-linked (GlcNAc...) asparagine glycan. A lipid anchor (GPI-anchor amidated glycine) is attached at G101. Positions 102–124 (TALTGRTVLLVAPLLAAARNLCL) are cleaved as a propeptide — removed in mature form.

As to quaternary structure, interacts with T-cell surface antigen CD2. N- and O-glycosylated.

The protein localises to the cell membrane. It is found in the secreted. In terms of biological role, potent inhibitor of the complement membrane attack complex (MAC) action, which protects self-cells from damage during complement activation. Acts by binding to the beta-haipins of C8 (C8A and C8B) components of the assembling MAC, forming an intermolecular beta-sheet that prevents incorporation of the multiple copies of C9 required for complete formation of the osmolytic pore. The polypeptide is CD59 glycoprotein (Oryctolagus cuniculus (Rabbit)).